Reading from the N-terminus, the 234-residue chain is Ribosomal RNA small subunit methyltransferase G (234 aa).

S-adenosyl-L-methionine contacts are provided by residues Gly74, Phe79, 125–126 (AE), and Arg144.

This sequence belongs to the methyltransferase superfamily. RNA methyltransferase RsmG family.

The protein resides in the cytoplasm. In terms of biological role, specifically methylates the N7 position of a guanine in 16S rRNA. The chain is Ribosomal RNA small subunit methyltransferase G from Roseiflexus castenholzii (strain DSM 13941 / HLO8).